The primary structure comprises 91 residues: MEATLEQHLEDTMKNPSIVGVLCTDSQGLNLGCRGTLSDEHAGVISVLAQQAARLTSDPTDIPVVCLESDNGNIMIQKHDGITVAVHKMAS.

An N-acetylmethionine modification is found at Met-1.

It belongs to the LAMTOR5 family. Homodimer. Part of the Ragulator complex composed of LAMTOR1, LAMTOR2, LAMTOR3, LAMTOR4 and LAMTOR5. LAMTOR4 and LAMTOR5 form a heterodimer that interacts, through LAMTOR1, with a LAMTOR2, LAMTOR3 heterodimer. The Ragulator complex interacts with both the mTORC1 complex and heterodimers constituted of the Rag GTPases RagA/RRAGA, RagB/RRAGB, RagC/RRAGC and RagD/RRAGD; regulated by amino acid availability. The Ragulator complex interacts with SLC38A9; the probable amino acid sensor. Component of the lysosomal folliculin complex (LFC), composed of FLCN, FNIP1 (or FNIP2), RagA/RRAGA or RagB/RRAGB GDP-bound, RagC/RRAGC or RagD/RRAGD GTP-bound, and Ragulator. Interacts with phosphorylated BIRC5; the resulting complex binds pro-caspase-9, as well as active caspase-9, but much less efficiently. Interacts with SUPV3L1.

It localises to the lysosome. The protein localises to the cytoplasm. Its subcellular location is the cytosol. Its function is as follows. As part of the Ragulator complex it is involved in amino acid sensing and activation of mTORC1, a signaling complex promoting cell growth in response to growth factors, energy levels, and amino acids. Activated by amino acids through a mechanism involving the lysosomal V-ATPase, the Ragulator plays a dual role for the small GTPases Rag (RagA/RRAGA, RagB/RRAGB, RagC/RRAGC and/or RagD/RRAGD): it (1) acts as a guanine nucleotide exchange factor (GEF), activating the small GTPases Rag and (2) mediates recruitment of Rag GTPases to the lysosome membrane. Activated Ragulator and Rag GTPases function as a scaffold recruiting mTORC1 to lysosomes where it is in turn activated. When complexed to BIRC5, interferes with apoptosome assembly, preventing recruitment of pro-caspase-9 to oligomerized APAF1, thereby selectively suppressing apoptosis initiated via the mitochondrial/cytochrome c pathway. This is Ragulator complex protein LAMTOR5 (Lamtor5) from Mus musculus (Mouse).